The following is a 413-amino-acid chain: Aspartate aminotransferase, cytoplasmic (413 aa).

L-aspartate contacts are provided by Gly39 and Trp141. A Phosphoserine modification is found at Ser149. Asn195 provides a ligand contact to L-aspartate. N6-(pyridoxal phosphate)lysine is present on Lys259. An L-aspartate-binding site is contributed by Arg387.

It belongs to the class-I pyridoxal-phosphate-dependent aminotransferase family. As to quaternary structure, homodimer. Pyridoxal 5'-phosphate is required as a cofactor.

The protein localises to the cytoplasm. It catalyses the reaction L-aspartate + 2-oxoglutarate = oxaloacetate + L-glutamate. The enzyme catalyses L-cysteine + 2-oxoglutarate = 2-oxo-3-sulfanylpropanoate + L-glutamate. The catalysed reaction is (2S)-2-aminobutanoate + 2-oxoglutarate = 2-oxobutanoate + L-glutamate. It carries out the reaction 3-sulfino-L-alanine + 2-oxoglutarate = 3-sulfinopyruvate + L-glutamate. Functionally, biosynthesis of L-glutamate from L-aspartate or L-cysteine. Important regulator of levels of glutamate, the major excitatory neurotransmitter of the vertebrate central nervous system. Acts as a scavenger of glutamate in brain neuroprotection. The aspartate aminotransferase activity is involved in hepatic glucose synthesis during development and in adipocyte glyceroneogenesis. Using L-cysteine as substrate, regulates levels of mercaptopyruvate, an important source of hydrogen sulfide. Mercaptopyruvate is converted into H(2)S via the action of 3-mercaptopyruvate sulfurtransferase (3MST). Hydrogen sulfide is an important synaptic modulator and neuroprotectant in the brain. In addition, catalyzes (2S)-2-aminobutanoate, a by-product in the cysteine biosynthesis pathway. In Homo sapiens (Human), this protein is Aspartate aminotransferase, cytoplasmic.